Consider the following 254-residue polypeptide: Adenosylcobinamide-GDP ribazoletransferase (254 aa).

A run of 7 helical transmembrane segments spans residues 27–47, 50–70, 104–124, 131–151, 170–190, 194–214, and 233–253; these read SSLYWFPVVGLVIGGIVVLFA, GMGAGWPELAAVLALLGGFIL, VGSFGSLALIGVMLFKWICLL, AYGMIAAGVVLSRTAQVLLAA, AGWPHLLVASVSGVVLLFVLL, VVPSSILLFGSVVALFFVGWL, and LVEIAVWFVAALWLKGLFSAI.

It belongs to the CobS family. Mg(2+) serves as cofactor.

Its subcellular location is the cell inner membrane. The enzyme catalyses alpha-ribazole + adenosylcob(III)inamide-GDP = adenosylcob(III)alamin + GMP + H(+). It carries out the reaction alpha-ribazole 5'-phosphate + adenosylcob(III)inamide-GDP = adenosylcob(III)alamin 5'-phosphate + GMP + H(+). It functions in the pathway cofactor biosynthesis; adenosylcobalamin biosynthesis; adenosylcobalamin from cob(II)yrinate a,c-diamide: step 7/7. Its function is as follows. Joins adenosylcobinamide-GDP and alpha-ribazole to generate adenosylcobalamin (Ado-cobalamin). Also synthesizes adenosylcobalamin 5'-phosphate from adenosylcobinamide-GDP and alpha-ribazole 5'-phosphate. The sequence is that of Adenosylcobinamide-GDP ribazoletransferase from Chlorobaculum parvum (strain DSM 263 / NCIMB 8327) (Chlorobium vibrioforme subsp. thiosulfatophilum).